Consider the following 318-residue polypeptide: Lysophospholipase D GDPD3 (318 aa).

The Cytoplasmic portion of the chain corresponds to 1 to 2 (MS). The helical transmembrane segment at 3–23 (LLLYYALPALGSYAMLSIFFL) threads the bilayer. Residues 24 to 198 (RRPHLLHTPR…KAANPEMPLS (175 aa)) are Extracellular-facing. Residues 39–308 (IRLGAHRGGS…DYPTALRHYL (270 aa)) enclose the GP-PDE domain. Positions 71, 73, and 86 each coordinate a divalent metal cation. The chain crosses the membrane as a helical span at residues 199–221 (FTISRGFWVLLSYYLGLLPFIPI). Topologically, residues 222–318 (PEKFFFCFLP…DNHGPAARTS (97 aa)) are cytoplasmic.

The protein belongs to the glycerophosphoryl diester phosphodiesterase family. In terms of tissue distribution, widely expressed, with high level in kidney and ovary.

It localises to the membrane. Its subcellular location is the cytoplasm. The protein localises to the perinuclear region. It is found in the endoplasmic reticulum. The catalysed reaction is 1-hexadecanoyl-sn-glycero-3-phosphocholine + H2O = 1-hexadecanoyl-sn-glycero-3-phosphate + choline + H(+). It catalyses the reaction 1-hexadecanoyl-sn-glycero-3-phosphocholine + H2O = sn-glycerol 3-phosphocholine + hexadecanoate + H(+). The enzyme catalyses 1-O-(1Z-octadecenyl)-sn-glycero-3-phospho-N-hexadecanoyl-ethanolamine + H2O = 1-O-(1Z-octadecenyl)-sn-glycero-3-phosphate + N-hexadecanoylethanolamine + H(+). It carries out the reaction N-(5Z,8Z,11Z,14Z-eicosatetraenoyl)-1-(9Z-octadecenoyl)-sn-glycero-3-phosphoethanolamine + H2O = N-(5Z,8Z,11Z,14Z-eicosatetraenoyl)-ethanolamine + 1-(9Z-octadecenoyl)-sn-glycero-3-phosphate + H(+). The catalysed reaction is N,1-di-(9Z-octadecenoyl)-sn-glycero-3-phosphoethanolamine + H2O = N-(9Z-octadecenoyl) ethanolamine + 1-(9Z-octadecenoyl)-sn-glycero-3-phosphate + H(+). It catalyses the reaction N-hexadecanoyl-1-(9Z-octadecenoyl)-sn-glycero-3-phosphoethanolamine + H2O = N-hexadecanoylethanolamine + 1-(9Z-octadecenoyl)-sn-glycero-3-phosphate + H(+). The enzyme catalyses 1-O-hexadecyl-sn-glycero-3-phosphocholine + H2O = 1-O-hexadecyl-sn-glycero-3-phosphate + choline + H(+). Lysophospholipase D activity is stimulated by calcium. Loss of lysophospholipase D activity in presence of EDTA. In terms of biological role, hydrolyzes lysoglycerophospholipids to produce lysophosphatidic acid (LPA) and the corresponding amines. Shows a preference for 1-O-alkyl-sn-glycero-3-phosphocholine (lyso-PAF), lysophosphatidylcholine (lyso-PC) and N-acylethanolamine lysophospholipids. Does not display glycerophosphodiester phosphodiesterase activity, since it cannot hydrolyze either glycerophosphoinositol or glycerophosphocholine. This is Lysophospholipase D GDPD3 from Homo sapiens (Human).